The sequence spans 583 residues: Interactor of constitutive active ROPs 2, chloroplastic (583 aa).

The transit peptide at 1 to 55 directs the protein to the chloroplast; the sequence is MQTPKPRPGSLEVPQKKSPASTPKTARKLKTSESDPVSSPNTKIRTPKTQSPKVV. 2 disordered regions span residues 1–80 and 101–125; these read MQTP…PELA and EALKKEAQDQAEETKQQLMEINASE. Positions 34-52 are enriched in polar residues; sequence SDPVSSPNTKIRTPKTQSP. Coiled coils occupy residues 74-207 and 238-516; these read GKTP…DAKE and MKMS…AAAT. Residues 102 to 115 show a composition bias toward basic and acidic residues; that stretch reads ALKKEAQDQAEETK. The disordered stretch occupies residues 518 to 583; it reads LSGGNNNNNS…IGVLLKKSQK (66 aa). Positions 519–529 are enriched in low complexity; it reads SGGNNNNNSNG. S540 carries the phosphoserine modification.

This sequence belongs to the ICR family. Interacts with ARAC8, ARAC11 and KIN13A in vitro, but not with ICR1 or SEC3A.

The protein localises to the plastid. The protein resides in the chloroplast. Its function is as follows. Acts as a scaffold, mediating interaction of ROPs with different proteins. The sequence is that of Interactor of constitutive active ROPs 2, chloroplastic (ICR2) from Arabidopsis thaliana (Mouse-ear cress).